Reading from the N-terminus, the 404-residue chain is Exodeoxyribonuclease 7 large subunit (404 aa).

It belongs to the XseA family. As to quaternary structure, heterooligomer composed of large and small subunits.

The protein localises to the cytoplasm. The enzyme catalyses Exonucleolytic cleavage in either 5'- to 3'- or 3'- to 5'-direction to yield nucleoside 5'-phosphates.. Bidirectionally degrades single-stranded DNA into large acid-insoluble oligonucleotides, which are then degraded further into small acid-soluble oligonucleotides. This chain is Exodeoxyribonuclease 7 large subunit, found in Ruminiclostridium cellulolyticum (strain ATCC 35319 / DSM 5812 / JCM 6584 / H10) (Clostridium cellulolyticum).